The chain runs to 287 residues: Nitrogenase iron protein (287 aa).

8–15 is a binding site for ATP; that stretch reads GKGGIGKS. C96 is a binding site for [4Fe-4S] cluster. R99 is subject to ADP-ribosylarginine; by dinitrogenase reductase ADP-ribosyltransferase. A [4Fe-4S] cluster-binding site is contributed by C130.

Belongs to the NifH/BchL/ChlL family. As to quaternary structure, homodimer. It depends on [4Fe-4S] cluster as a cofactor. The reversible ADP-ribosylation of Arg-99 inactivates the nitrogenase reductase and regulates nitrogenase activity.

It catalyses the reaction N2 + 8 reduced [2Fe-2S]-[ferredoxin] + 16 ATP + 16 H2O = H2 + 8 oxidized [2Fe-2S]-[ferredoxin] + 2 NH4(+) + 16 ADP + 16 phosphate + 6 H(+). Its function is as follows. The key enzymatic reactions in nitrogen fixation are catalyzed by the nitrogenase complex, which has 2 components: the iron protein and the molybdenum-iron protein. This chain is Nitrogenase iron protein (nifH), found in Frankia sp. (strain EuIK1).